Consider the following 59-residue polypeptide: MAKTIKVTQVRSSIARLPKHKATLRGLGLRRINHTVELIDTPAIRGMINQVSYMVKVEE.

This sequence belongs to the universal ribosomal protein uL30 family. As to quaternary structure, part of the 50S ribosomal subunit.

This is Large ribosomal subunit protein uL30 from Histophilus somni (strain 129Pt) (Haemophilus somnus).